The sequence spans 247 residues: Uroporphyrinogen-III C-methyltransferase (247 aa).

S-adenosyl-L-homocysteine is bound by residues Pro-12, 117 to 118, Met-168, Ala-197, and Ala-225; that span reads TA.

This sequence belongs to the precorrin methyltransferase family.

The catalysed reaction is uroporphyrinogen III + 2 S-adenosyl-L-methionine = precorrin-2 + 2 S-adenosyl-L-homocysteine + H(+). It participates in cofactor biosynthesis; adenosylcobalamin biosynthesis; precorrin-2 from uroporphyrinogen III: step 1/1. Its pathway is porphyrin-containing compound metabolism; siroheme biosynthesis; precorrin-2 from uroporphyrinogen III: step 1/1. Functionally, catalyzes the two successive C-2 and C-7 methylation reactions involved in the conversion of uroporphyrinogen III to precorrin-2 via the intermediate formation of precorrin-1. It is a step in the biosynthesis of both cobalamin (vitamin B12) and siroheme. This chain is Uroporphyrinogen-III C-methyltransferase, found in Pseudomonas fluorescens.